Here is a 1482-residue protein sequence, read N- to C-terminus: Cystic fibrosis transmembrane conductance regulator (1482 aa).

The Cytoplasmic segment spans residues 1-77 (MQRSPLEKAS…KLINALRRCF (77 aa)). Residues 78–98 (FWRFMFYGILLYLGEVTKAVQ) traverse the membrane as a helical segment. The 285-residue stretch at 81-365 (FMFYGILLYL…WAVQTWYDSL (285 aa)) folds into the ABC transmembrane type-1 1 domain. Topologically, residues 99-122 (PLLLGRIIASYDPDNKVERSIAIY) are extracellular. A helical transmembrane segment spans residues 123–146 (LGIGLCLLFIVRTLLLHPAIFGLH). Over 147-195 (HIGMQMRIAMFSLIYKKILKLSSRVLDKISIGQLVSLLSNNLNKFDEGL) the chain is Cytoplasmic. Residues 196 to 216 (ALAHFVWIAPLQVTLLMGLLW) form a helical membrane-spanning segment. Over 217–222 (ELLQAS) the chain is Extracellular. A helical transmembrane segment spans residues 223–243 (AFCGLGFLIVLALVQAGLGRM). Over 244 to 298 (MMKYRDQRAGKINERLVITSEMIENIQSVKAYCWEEAMEKMIENLRQTELKLTRK) the chain is Cytoplasmic. The chain crosses the membrane as a helical span at residues 299 to 319 (AAYVRYFNSSAFFFSGFFVVF). The Extracellular segment spans residues 320-339 (LSVLPYALIKGIILRKIFTT). The helical transmembrane segment at 340-358 (ISFCIVLRMAVTRQFPWAV) threads the bilayer. Residues 359–859 (QTWYDSLGAI…YLRYLAVNKS (501 aa)) lie on the Cytoplasmic side of the membrane. ATP contacts are provided by residues tryptophan 401, 458-465 (GSTGAGKT), and glutamine 493. The ABC transporter 1 domain maps to 423–646 (NGDNSLFFSN…RPDFSSKLMG (224 aa)). A lipid anchor (S-palmitoyl cysteine) is attached at cysteine 524. 2 positions are modified to phosphoserine: serine 549 and serine 660. The segment at 654–832 (SAERRNSILT…EEINEEYLKE (179 aa)) is disordered R region. Position 670 is a phosphoserine; by PKA (serine 670). A Phosphoserine modification is found at serine 686. Lysine 688 is covalently cross-linked (Glycyl lysine isopeptide (Lys-Gly) (interchain with G-Cter in ubiquitin)). Phosphoserine occurs at positions 700 and 712. Threonine 717 carries the post-translational modification Phosphothreonine. 5 positions are modified to phosphoserine: serine 738, serine 769, serine 791, serine 796, and serine 814. The chain crosses the membrane as a helical span at residues 860–880 (LSLVLIWCLVIFLAEVAISLA). The ABC transmembrane type-1 2 domain maps to 860–1156 (LSLVLIWCLV…AVNSSIDVDS (297 aa)). Residues 881–919 (VLLLLDKSPRYSKGNGTASGNGSSAVIITSTSSYYLFYI) are Extracellular-facing. 2 N-linked (GlcNAc...) asparagine glycosylation sites follow: asparagine 895 and asparagine 901. A discontinuously helical membrane pass occupies residues 920–940 (YVGVADTLLALGFFRGLPLVH). At 941–991 (TLITVSKILHHRMLHSVLRAPMSTLNMLKAGGILNRFSKDIAILDDLLPLT) the chain is on the cytoplasmic side. The chain crosses the membrane as a helical span at residues 992 to 1012 (IFDFVQLLLIVIGAVAVVSVL). Residues 1013–1014 (QP) are Extracellular-facing. Residues 1015–1035 (YIFLATVPVIAAFVILRGYFL) form a helical membrane-spanning segment. At 1036-1096 (HTSQQLKQLE…TANWFLYLST (61 aa)) the chain is on the cytoplasmic side. The helical transmembrane segment at 1097–1117 (LRWFQMRIEMIFVVFFIAVTF) threads the bilayer. Topologically, residues 1118-1131 (ISILTTGEGEGTVG) are extracellular. The chain crosses the membrane as a helical span at residues 1132-1152 (IILTLAMNIMGTLQWAVNSSI). Topologically, residues 1153-1482 (DVDSLMRSVS…TEEEVQETRL (330 aa)) are cytoplasmic. The ABC transporter 2 domain occupies 1212–1445 (MTVKDLTARY…KSLFRQAISP (234 aa)). ATP-binding positions include tyrosine 1221 and 1246–1253 (GRTGAGKS). An interaction with GORASP2 region spans residues 1388–1482 (RTLKQAFADC…TEEEVQETRL (95 aa)). Residue cysteine 1397 is the site of S-palmitoyl cysteine attachment. 2 positions are modified to phosphoserine: serine 1446 and serine 1458. The disordered stretch occupies residues 1450–1482 (KLFPRRNSSKHKSRSPITALKEETEEEVQETRL). Residues 1451–1463 (LFPRRNSSKHKSR) are compositionally biased toward basic residues. Residues 1472 to 1482 (ETEEEVQETRL) are compositionally biased toward acidic residues. A PDZ-binding motif is present at residues 1480-1482 (TRL).

It belongs to the ABC transporter superfamily. ABCC family. CFTR transporter (TC 3.A.1.202) subfamily. Monomer; does not require oligomerization for channel activity. May form oligomers in the membrane. Interacts with SLC26A3, SLC26A6 and NHERF1. Interacts with SHANK2. Interacts with MYO6. Interacts (via C-terminus) with GOPC (via PDZ domain); this promotes CFTR internalization and thereby decreases channel activity. Interacts with SLC4A7 through NHERF1. Found in a complex with MYO5B and RAB11A. Interacts with ANO1. Interacts with SLC26A8. Interacts with AHCYL1; the interaction increases CFTR activity. Interacts with CSE1L. The core-glycosylated form interacts with GORASP2 (via PDZ GRASP-type 1 domain) in respone to ER stress. Interacts with MARCHF2; the interaction leads to CFTR ubiqtuitination and degradation. Interacts with ADGRG2. In terms of processing, N-glycosylated. Post-translationally, phosphorylated; cAMP treatment promotes phosphorylation and activates the channel. Dephosphorylation decreases the ATPase activity (in vitro). Phosphorylation at PKA sites activates the channel. Phosphorylation at PKC sites enhances the response to phosphorylation by PKA. Phosphorylated by AMPK; this inhibits channel activity. Ubiquitinated, leading to its degradation in the lysosome. Deubiquitination by USP10 in early endosomes enhances its endocytic recycling to the cell membrane. Ubiquitinated by RNF185 during ER stress. Ubiquitinated by MARCHF2.

The protein localises to the apical cell membrane. Its subcellular location is the early endosome membrane. It localises to the cell membrane. It is found in the recycling endosome membrane. The protein resides in the endoplasmic reticulum membrane. The protein localises to the nucleus. The enzyme catalyses ATP + H2O + closed Cl(-) channel = ADP + phosphate + open Cl(-) channel.. It carries out the reaction chloride(in) = chloride(out). It catalyses the reaction hydrogencarbonate(in) = hydrogencarbonate(out). The catalysed reaction is ATP + H2O = ADP + phosphate + H(+). Its function is as follows. Epithelial ion channel that plays an important role in the regulation of epithelial ion and water transport and fluid homeostasis. Mediates the transport of chloride ions across the cell membrane. Possesses an intrinsic ATPase activity and utilizes ATP to gate its channel; the passive flow of anions through the channel is gated by cycles of ATP binding and hydrolysis by the ATP-binding domains. The ion channel is also permeable to HCO(3)(-); selectivity depends on the extracellular chloride concentration. Exerts its function also by modulating the activity of other ion channels and transporters. Contributes to the regulation of the pH and the ion content of the epithelial fluid layer. Modulates the activity of the epithelial sodium channel (ENaC) complex, in part by regulating the cell surface expression of the ENaC complex. May regulate bicarbonate secretion and salvage in epithelial cells by regulating the transporter SLC4A7. Can inhibit the chloride channel activity of ANO1. Plays a role in the chloride and bicarbonate homeostasis during sperm epididymal maturation and capacitation. The sequence is that of Cystic fibrosis transmembrane conductance regulator from Otolemur garnettii (Small-eared galago).